Reading from the N-terminus, the 208-residue chain is Dephospho-CoA kinase (208 aa).

Positions 5-201 (IVALTGGIGS…QRYLALAASA (197 aa)) constitute a DPCK domain. 13-18 (GSGKST) contributes to the ATP binding site.

It belongs to the CoaE family.

Its subcellular location is the cytoplasm. The catalysed reaction is 3'-dephospho-CoA + ATP = ADP + CoA + H(+). It functions in the pathway cofactor biosynthesis; coenzyme A biosynthesis; CoA from (R)-pantothenate: step 5/5. In terms of biological role, catalyzes the phosphorylation of the 3'-hydroxyl group of dephosphocoenzyme A to form coenzyme A. This is Dephospho-CoA kinase from Sodalis glossinidius (strain morsitans).